A 767-amino-acid chain; its full sequence is Polyribonucleotide nucleotidyltransferase (767 aa).

Mg(2+) is bound by residues D488 and D494. Residues 555–614 enclose the KH domain; the sequence is PRLYTMKINPEKIRDVIGKGGSVIRALTEETGCQIDIGEDGTITIASTDADKAELAKKRI. The 69-residue stretch at 624–692 folds into the S1 motif domain; that stretch reads GKVYEGPVVK…EKGRIKLSMK (69 aa). Residues 700–742 show a composition bias toward basic and acidic residues; it reads GMEFEERAPRREGGFGDRGDRGDRGPRRDRGGDRPERGERPAR. A disordered region spans residues 700–767; that stretch reads GMEFEERAPR…QPQQQQGQQQ (68 aa). Residues 752–767 are compositionally biased toward low complexity; it reads GAPAAGQPQQQQGQQQ.

This sequence belongs to the polyribonucleotide nucleotidyltransferase family. Mg(2+) is required as a cofactor.

It is found in the cytoplasm. The catalysed reaction is RNA(n+1) + phosphate = RNA(n) + a ribonucleoside 5'-diphosphate. Involved in mRNA degradation. Catalyzes the phosphorolysis of single-stranded polyribonucleotides processively in the 3'- to 5'-direction. The protein is Polyribonucleotide nucleotidyltransferase of Leptothrix cholodnii (strain ATCC 51168 / LMG 8142 / SP-6) (Leptothrix discophora (strain SP-6)).